Consider the following 146-residue polypeptide: Large ribosomal subunit protein uL15 (146 aa).

A compositionally biased stretch (basic and acidic residues) spans 1 to 18 (MKLHELKPTPGSRHERNR). The segment at 1–69 (MKLHELKPTP…RLPKRGFNNP (69 aa)) is disordered. Residues 42–52 (SGGGVRPGFEG) are compositionally biased toward gly residues.

This sequence belongs to the universal ribosomal protein uL15 family. As to quaternary structure, part of the 50S ribosomal subunit.

Functionally, binds to the 23S rRNA. This chain is Large ribosomal subunit protein uL15, found in Exiguobacterium sp. (strain ATCC BAA-1283 / AT1b).